The primary structure comprises 115 residues: uncharacterized protein (115 aa).

Residues 1–91 (MTEYNANSIR…SELEGFKNVS (91 aa)) enclose the HTH arsR-type domain. The segment at residues 30–53 (ASLISHTLLLSYATVLRHLRILND) is a DNA-binding region (H-T-H motif).

Its function is as follows. Essential for virus function. This is an uncharacterized protein from Saccharolobus solfataricus (Sulfolobus solfataricus).